The following is a 338-amino-acid chain: Large ribosomal subunit protein uL10 (338 aa).

The disordered stretch occupies residues 303–338 (VEVSAAPAAEEEKEEEKKEEEKKEEDTGAAGLALLF). Residues 317–328 (EEKKEEEKKEED) show a composition bias toward basic and acidic residues.

It belongs to the universal ribosomal protein uL10 family. In terms of assembly, part of the 50S ribosomal subunit. Forms part of the ribosomal stalk which helps the ribosome interact with GTP-bound translation factors. Forms a heptameric L10(L12)2(L12)2(L12)2 complex, where L10 forms an elongated spine to which the L12 dimers bind in a sequential fashion.

In terms of biological role, forms part of the ribosomal stalk, playing a central role in the interaction of the ribosome with GTP-bound translation factors. The protein is Large ribosomal subunit protein uL10 of Methanocaldococcus jannaschii (strain ATCC 43067 / DSM 2661 / JAL-1 / JCM 10045 / NBRC 100440) (Methanococcus jannaschii).